We begin with the raw amino-acid sequence, 274 residues long: MSDFVNDGHTTPEAFVQHIKSLGRYDFPEPAIVDPEGMGIVAIGGDLAPETLISAYAQGLFPWFNDDEPIAWWCPEPRCVMQPTDYQPSKSLRKLANRSRWQLTLNQAFDEVIHACSLPRSNGVNNDLNESQPVGEHTWIHDEMIEAYTELHAQGFAHSIEVWDDKGALVGGLYGLKIGGIYFGESMFHIASNASKLAFWGLMRLCEHSNVNLVDCQLPNDHLMSLGAITLSRTEFLTQLDILISNSSDNWHKNSHKPLAVPLLGSLQPWQLNL.

The protein belongs to the L/F-transferase family.

It is found in the cytoplasm. It carries out the reaction N-terminal L-lysyl-[protein] + L-leucyl-tRNA(Leu) = N-terminal L-leucyl-L-lysyl-[protein] + tRNA(Leu) + H(+). The catalysed reaction is N-terminal L-arginyl-[protein] + L-leucyl-tRNA(Leu) = N-terminal L-leucyl-L-arginyl-[protein] + tRNA(Leu) + H(+). It catalyses the reaction L-phenylalanyl-tRNA(Phe) + an N-terminal L-alpha-aminoacyl-[protein] = an N-terminal L-phenylalanyl-L-alpha-aminoacyl-[protein] + tRNA(Phe). Its function is as follows. Functions in the N-end rule pathway of protein degradation where it conjugates Leu, Phe and, less efficiently, Met from aminoacyl-tRNAs to the N-termini of proteins containing an N-terminal arginine or lysine. In Psychrobacter cryohalolentis (strain ATCC BAA-1226 / DSM 17306 / VKM B-2378 / K5), this protein is Leucyl/phenylalanyl-tRNA--protein transferase.